We begin with the raw amino-acid sequence, 1065 residues long: Cellulose synthase A catalytic subunit 3 [UDP-forming] (1065 aa).

At 1-260 (MESEGETAGK…PSSRINPYRM (260 aa)) the chain is on the cytoplasmic side. A Phosphoserine modification is found at S3. Positions 20, 23, 39, 42, 47, 50, 62, and 65 each coordinate Zn(2+). Residues 20–66 (CQICSDNVGKTVDGDRFVACDICSFPVCRPCYEYERKDGNQSCPQCK) form an RING-type; degenerate zinc finger. Phosphoserine is present on residues S151, S211, and S216. The helical transmembrane segment at 261–281 (VIMLRLVILCLFLHYRITNPV) threads the bilayer. The Extracellular portion of the chain corresponds to 282-283 (PN). The helical transmembrane segment at 284 to 304 (AFALWLVSVICEIWFALSWIL) threads the bilayer. The Cytoplasmic portion of the chain corresponds to 305–842 (DQFPKWFPVN…LERFAYVNTT (538 aa)). UDP-alpha-D-glucose-binding residues include S343, K349, E350, and D379. D379 is an active-site residue. Residues 433–457 (VKDRRAMKREYEEFKIRINALVSKA) adopt a coiled-coil conformation. K520 is a UDP-alpha-D-glucose binding site. 2 residues coordinate Mn(2+): K521 and D545. The interval 643-672 (SKLCGGSRKKNSKAKKESDKKKSGRHTDST) is disordered. Over residues 656–670 (AKKESDKKKSGRHTD) the composition is skewed to basic and acidic residues. D765 is a catalytic residue. A helical transmembrane segment spans residues 843–863 (IYPITSIPLLMYCTLPAVCLF). Topologically, residues 864-874 (TNQFIIPQISN) are extracellular. Residues 875-895 (IASIWFLSLFLSIFATGILEM) form a helical membrane-spanning segment. Topologically, residues 896–910 (RWSGVGIDEWWRNEQ) are cytoplasmic. The chain crosses the membrane as a helical span at residues 911-931 (FWVIGGVSAHLFAVFQGILKV). The Extracellular portion of the chain corresponds to 932–961 (LAGIDTNFTVTSKASDEDGDFAELYLFKWT). Residue N938 is glycosylated (N-linked (GlcNAc...) asparagine). The chain crosses the membrane as a helical span at residues 962–982 (TLLIPPTTLLIVNLVGVVAGV). Residues 983–993 (SYAINSGYQSW) lie on the Cytoplasmic side of the membrane. Residues 994-1014 (GPLFGKLFFAFWVIVHLYPFL) form a helical membrane-spanning segment. At 1015–1023 (KGLMGRQNR) the chain is on the extracellular side. The helical transmembrane segment at 1024 to 1044 (TPTIVVVWSVLLASIFSLLWV) threads the bilayer. Residues 1045–1065 (RIDPFTSRVTGPDILECGINC) are Cytoplasmic-facing.

It belongs to the glycosyltransferase 2 family. Plant cellulose synthase subfamily. In terms of assembly, homodimer. Interacts with CESA1 and CESA6. Interacts with STL1 and STL2, but not with GOT1. Binds to CSI1 and CSI3. Interacts with PAT24/TIP1. It depends on Zn(2+) as a cofactor. Mn(2+) is required as a cofactor. In terms of processing, palmitoylated, in part by PAT24/TIP1. Expressed in young plants, flowers and roots, and to a lower extent in leaves and stems. Localized in all cells except meristematic cells. Accumulates particularly in root caps, root hairs, epidermal layer, midveins of leaves and anthers. Not present in old tissues.

The protein localises to the cell membrane. Its subcellular location is the golgi apparatus membrane. It catalyses the reaction [(1-&gt;4)-beta-D-glucosyl](n) + UDP-alpha-D-glucose = [(1-&gt;4)-beta-D-glucosyl](n+1) + UDP + H(+). It functions in the pathway glycan metabolism; plant cellulose biosynthesis. Catalytic subunit of cellulose synthase terminal complexes ('rosettes'), required for beta-1,4-glucan microfibril crystallization, a major mechanism of the cell wall formation. Involved in the primary cell wall formation, especially in roots. In Arabidopsis thaliana (Mouse-ear cress), this protein is Cellulose synthase A catalytic subunit 3 [UDP-forming].